We begin with the raw amino-acid sequence, 284 residues long: RNase adapter protein RapZ (284 aa).

An ATP-binding site is contributed by Gly-8–Ser-15. GTP is bound at residue Asp-56 to Asn-59. The RNA-binding stretch occupies residues Arg-266–Pro-284.

The protein belongs to the RapZ-like family. RapZ subfamily. In terms of assembly, homotrimer.

Its function is as follows. Modulates the synthesis of GlmS, by affecting the processing and stability of the regulatory small RNA GlmZ. When glucosamine-6-phosphate (GlcN6P) concentrations are high in the cell, RapZ binds GlmZ and targets it to cleavage by RNase E. Consequently, GlmZ is inactivated and unable to activate GlmS synthesis. Under low GlcN6P concentrations, RapZ is sequestered and inactivated by an other regulatory small RNA, GlmY, preventing GlmZ degradation and leading to synthesis of GlmS. The sequence is that of RNase adapter protein RapZ from Shigella dysenteriae serotype 1 (strain Sd197).